The primary structure comprises 66 residues: Hemicalcin (66 aa).

The N-terminal stretch at 1 to 21 (MRASLFIVIFVVSFITISCLS) is a signal peptide. Positions 22 to 33 (TDDEEARWIEKR) are excised as a propeptide. 3 disulfides stabilise this stretch: Cys-36–Cys-50, Cys-43–Cys-54, and Cys-49–Cys-65. Residues 55–57 (KRR) form an essential for stimulation of [3H]ryanodine binding to RYR1 region.

Belongs to the scorpion calcin family. As to expression, expressed by the venom gland.

It localises to the secreted. In terms of biological role, this toxin stabilizes ryanodine receptor 1 (RyR1) opening in a long-lasting subconductance state (20% and 38% of the full conductance state have been found). It promotes an increase in the opening probability at intermediate concentration. Furthermore, it triggers calcium release from sarcoplasmic vesicles (68 nM are enough to induce a sharp release, and 45% of the total calcium is released after toxin (100 nM) addition) probably by acting as a cell-penetrating peptide (CPP). In addition, it has been shown to dose-dependently stimulate ryanodine binding to RyR1 (EC(50)=6.9-71 nM). It also augments the bell-shaped calcium-[3H]ryanodine binding curve that is maximal at about 10 uM calcium concentration. It binds a different site as ryanodine. It acts synergistically with caffeine. In vivo, intracerebroventricular injection into mice induces neurotoxic symptoms, followed by death. In Hemiscorpius lepturus (Scorpion), this protein is Hemicalcin.